Reading from the N-terminus, the 131-residue chain is Inactive protein FON2 SPARE1 (131 aa).

The interval 67–131 (SPSSLTTTDR…VPTGPNPLHH (65 aa)) is disordered. Positions 76–97 (RHHHHHRHHGHHHHRGHDRWNR) are enriched in basic residues.

This sequence belongs to the CLV3/ESR signal peptide family. Expressed in all aerial apical meristems, including the floral and inflorescence meristems in the reproductive phase and the shoot apical meristem in the vegetative phase. Also detected in the primordia of lateral organs such as the leaf and the floral organs.

Its function is as follows. Non functional suppressor of the fon2 mutation. In Oryza sativa subsp. japonica, the protein has a single amino acid substitution at the putative processing site of the signal peptide while in all the other varieties/species of domesticated and wild rice tested the protein is functional. This chain is Inactive protein FON2 SPARE1 (FOS1), found in Oryza sativa subsp. japonica (Rice).